The sequence spans 274 residues: 2,3,4,5-tetrahydropyridine-2,6-dicarboxylate N-succinyltransferase (274 aa).

It belongs to the transferase hexapeptide repeat family.

It is found in the cytoplasm. The enzyme catalyses (S)-2,3,4,5-tetrahydrodipicolinate + succinyl-CoA + H2O = (S)-2-succinylamino-6-oxoheptanedioate + CoA. It participates in amino-acid biosynthesis; L-lysine biosynthesis via DAP pathway; LL-2,6-diaminopimelate from (S)-tetrahydrodipicolinate (succinylase route): step 1/3. The sequence is that of 2,3,4,5-tetrahydropyridine-2,6-dicarboxylate N-succinyltransferase from Escherichia coli (strain SMS-3-5 / SECEC).